Reading from the N-terminus, the 344-residue chain is MNVAIIGATGYSGAELFRLLHGHPHVSRCDVFSSSQDGVHVSESFPHVGSVDGAVLHKLEIEALSRYDAVFFATPPGVSGEWAPALVDRGVKVIDLSGDFRLKDGAVYEQWYGREAAPAEYLQKAVYGLTEWNREAVREAVLLSNPGCYPTATLLGLAPLVKEGLIQEDSIIVDAKSGVSGAGRKAGLGTHFSEVNENVKIYKVNVHQHIPEIEQTLQTWNEAMEPITFSTHLIPMTRGIMATIYAKAKQPISPNDLVDLYKTSYEGSPFIRVRKVGQFPATKEVYGSNYCDIGLAYDERTGRVTVVSVIDNLMKGAAGQAVQNFNLMMGWDEAEGLQSLPIYP.

Residue Cys148 is part of the active site.

Belongs to the NAGSA dehydrogenase family. Type 1 subfamily.

The protein localises to the cytoplasm. It catalyses the reaction N-acetyl-L-glutamate 5-semialdehyde + phosphate + NADP(+) = N-acetyl-L-glutamyl 5-phosphate + NADPH + H(+). It participates in amino-acid biosynthesis; L-arginine biosynthesis; N(2)-acetyl-L-ornithine from L-glutamate: step 3/4. In terms of biological role, catalyzes the NADPH-dependent reduction of N-acetyl-5-glutamyl phosphate to yield N-acetyl-L-glutamate 5-semialdehyde. This chain is N-acetyl-gamma-glutamyl-phosphate reductase, found in Geobacillus kaustophilus (strain HTA426).